The chain runs to 170 residues: Neurotensin/neuromedin N (170 aa).

Residues 1–23 (MMAGMKIQLVCMLLLAFSSWSLC) form the signal peptide. At Gln-151 the chain carries Pyrrolidone carboxylic acid.

Belongs to the neurotensin family. Interacts with NTSR1. Interacts with SORT1. Interacts with SORL1. In terms of processing, neurotensin is cleaved and degraded by Angiotensin-converting enzyme (ACE) and neprilysin (MME).

The protein localises to the secreted. It is found in the cytoplasmic vesicle. Its subcellular location is the secretory vesicle. Neurotensin may play an endocrine or paracrine role in the regulation of fat metabolism. It causes contraction of smooth muscle. This is Neurotensin/neuromedin N (NTS) from Homo sapiens (Human).